A 336-amino-acid chain; its full sequence is Potassium channel subfamily K member 1 (336 aa).

The Cytoplasmic segment spans residues 1–20; sequence MLQSLAGSSCVRLVERHRSA. A helical membrane pass occupies residues 21–41; that stretch reads WCFGFLVLGYLLYLVFGAVVF. The Extracellular portion of the chain corresponds to 42-103; it reads SSVELPYEDL…SNASGNWNWD (62 aa). Asparagine 95 is a glycosylation site (N-linked (GlcNAc...) asparagine). The segment at residues 104-116 is an intramembrane region (helical); the sequence is FTSALFFASTVLS. An intramembrane segment occupies 117 to 122; the sequence is TTGYGH. The segment at 117–122 is selectivity filter 1; sequence TTGYGH. Over 123-132 the chain is Extracellular; it reads TVPLSDGGKA. The helical transmembrane segment at 133–156 threads the bilayer; it reads FCIIYSVIGIPFTLLFLTAVVQRI. Topologically, residues 157-181 are cytoplasmic; the sequence is TVHVTRRPVLYFHIRWGFSKQVVAI. A helical transmembrane segment spans residues 182 to 202; that stretch reads VHAVLLGFVTVSCFFFIPAAV. At 203 to 211 the chain is on the extracellular side; it reads FSVLEDDWN. The segment at residues 212-224 is an intramembrane region (helical); the sequence is FLESFYFCFISLS. The interval 225 to 230 is selectivity filter 2; that stretch reads TIGLGD. Residues 225-231 lie within the membrane without spanning it; sequence TIGLGDY. At 232–243 the chain is on the extracellular side; the sequence is VPGEGYNQKFRE. A helical membrane pass occupies residues 244 to 267; it reads LYKIGITCYLLLGLIAMLVVLETF. Over 268-336 the chain is Cytoplasmic; that stretch reads CELHELKKFR…SACVDGPANH (69 aa). Lysine 274 participates in a covalent cross-link: Glycyl lysine isopeptide (Lys-Gly) (interchain with G-Cter in SUMO). Residues 293-299 are important for intracellular retention in recycling endosomes; the sequence is IIEHDQL. A Phosphoserine modification is found at serine 326.

Belongs to the two pore domain potassium channel (TC 1.A.1.8) family. Homodimer; disulfide-linked. Heterodimer with KCNK2; disulfide-linked. In astrocytes, forms mostly heterodimeric potassium channels with KCNK2, with only a minor proportion of functional channels containing homodimeric KCNK1. Interacts with KCNK3 and KCNK9, forming functional heterodimeric channels. Interacts with GNG4. Identified in a complex with PSD and ARF6; interacts only with PSD that is bound to ARF6. Interacts with UBE2I. In terms of processing, sumoylation is controversial. Sumoylated by UBE2I. Not sumoylated when expressed in xenopus oocytes or mammalian cells. Sumoylation inactivates the channel, but does not interfere with expression at the cell membrane. Sumoylation of a single subunit is sufficient to silence the dimeric channel. Sumoylation of KCNK1 is sufficient to silence heterodimeric channels formed by KCNK1 and KCNK3 or KCNK9. Desumoylated by SENP1; this activates the channel. Desumoylated by SENP1; this strongly increases halothane-mediated activation of heterodimeric channels formed with KCNK9. SENP1 treatment has no effect. In terms of tissue distribution, detected in bronchial epithelial cells. Detected in heart left atrium and left ventricle. Detected in cardiac myocytes (at protein level). Widely expressed with high levels in heart, brain and kidney, and lower levels in colon, ovary, placenta, lung and liver. Highly expressed in cerebellum, and detected at lower levels in amygdala, caudate nucleus, brain cortex, hippocampus, putamen, substantia nigra, thalamus, dorsal root ganglion, spinal cord, pituitary, heart, kidney, lung, placenta, pancreas, stomach, small intestine, uterus and prostate. Detected in right and left heart ventricle and atrium, and in heart Purkinje fibers.

It localises to the cell membrane. Its subcellular location is the recycling endosome. The protein localises to the synaptic cell membrane. It is found in the cytoplasmic vesicle. The protein resides in the perikaryon. It localises to the cell projection. Its subcellular location is the dendrite. The protein localises to the apical cell membrane. The enzyme catalyses K(+)(in) = K(+)(out). The catalysed reaction is NH4(+)(in) = NH4(+)(out). It carries out the reaction Na(+)(in) = Na(+)(out). It catalyses the reaction Rb(+)(in) = Rb(+)(out). The enzyme catalyses Cs(+)(in) = Cs(+)(out). The catalysed reaction is Li(+)(in) = Li(+)(out). It carries out the reaction L-glutamate(out) = L-glutamate(in). It catalyses the reaction chloride(in) = chloride(out). Its activity is regulated as follows. Inhibited by Ba(2+) ions and quinidine. Inhibited by quinine. Is slightly inhibited by 10 mM tetraethylammonium (TEA), and only marginally inhibited by 4-aminopyridine, charybdotoxin and dendrotoxin. Lowering the extracellular pH to below 6.5 transiently activates the channel, and then inhibits channel activity. Inhibited when the intracellular pH is decreased down to pH 6.0, but this may be due to indirect effects. Functionally, ion channel that contributes to passive transmembrane potassium transport and to the regulation of the resting membrane potential in brain astrocytes, but also in kidney and in other tissues. Forms dimeric channels through which potassium ions pass in accordance with their electrochemical gradient. The channel is selective for K(+) ions at physiological potassium concentrations and at neutral pH, but becomes permeable to Na(+) at subphysiological K(+) levels and upon acidification of the extracellular medium. The homodimer has very low potassium channel activity, when expressed in heterologous systems, and can function as weakly inward rectifying potassium channel. Channel activity is modulated by activation of serotonin receptors. Heterodimeric channels containing KCNK1 and KCNK2 have much higher activity, and may represent the predominant form in astrocytes. Heterodimeric channels containing KCNK1 and KCNK3 or KCNK9 have much higher activity. Heterodimeric channels formed by KCNK1 and KCNK9 may contribute to halothane-sensitive currents. Mediates outward rectifying potassium currents in dentate gyrus granule cells and contributes to the regulation of their resting membrane potential. Contributes to the regulation of action potential firing in dentate gyrus granule cells and down-regulates their intrinsic excitability. In astrocytes, the heterodimer formed by KCNK1 and KCNK2 is required for rapid glutamate release in response to activation of G-protein coupled receptors, such as F2R and CNR1. Required for normal ion and water transport in the kidney. Contributes to the regulation of the resting membrane potential of pancreatic beta cells. The low channel activity of homodimeric KCNK1 may be due to sumoylation. The low channel activity may be due to rapid internalization from the cell membrane and retention in recycling endosomes. Permeable to monovalent cations with ion selectivity for K(+) &gt; Rb(+) &gt;&gt; NH4(+) &gt;&gt; Cs(+) = Na(+) = Li(+). The chain is Potassium channel subfamily K member 1 (KCNK1) from Homo sapiens (Human).